The chain runs to 265 residues: RNA-binding protein 7 (265 aa).

Position 2 is an N-acetylglycine (Gly2). An RRM domain is found at 10–87; it reads RTLFVGNLET…RPIKIQFRSG (78 aa). ZCCHC8 binding regions lie at residues 25-35 and 59-76; these read LLFELFHQAGP and HEVS…IKLF. The tract at residues 91–125 is disordered; sequence ASQDASVSYPQHHVGNLSPTSTSPNSYERTVGNVS. Positions 107–125 are enriched in polar residues; the sequence is LSPTSTSPNSYERTVGNVS. At Ser136 the chain carries Phosphoserine; by MAPKAPK2. The residue at position 137 (Ser137) is a Phosphoserine. At Arg152 the chain carries Omega-N-methylarginine. Disordered regions lie at residues 166-224 and 237-265; these read DQLG…HGSD and DDRN…SSRH. Residues 170–196 show a composition bias toward polar residues; sequence FSPSAQPHGHTFNQSSSSQWRQDALSS. A Phosphoserine modification is found at Ser203. Basic and acidic residues-rich tracts occupy residues 207–224 and 237–256; these read LADR…HGSD and DDRN…DSSR.

As to quaternary structure, component of the nuclear exosome targeting (NEXT) complex composed of MTREX, ZCCHC8, and RBM7 that directs a subset of non-coding short-lived RNAs for exosomal degradation. Interacts with ZCCHC8 and SF3B2/SAP145. Binds to MTREX through ZCCHC8. Interacts with YWHAE and YWHAZ; these interactions are stress-dependent and RBM7 phosphorylation dependent; release RNA from the NEXT complex and may affect RNA targeting to the nuclear RNA exosomome for degradation. Interacts with MEPCE and LARP7, the core subunits of 7SK snRNP; upon genotoxic stress this interaction is enhanced, triggering the release of inactive P-TEFb complex from the core and P-TEFb complex activation. Phosphorylated at Ser-136 by MAPK14/p38-alpha-activated MAPKAPK2/MK2; this phosphorylation is stress-dependent; this phosphorylation decreases its RNA-binding capacity therefore affecting RNA nuclear exosome-mediated degradation. This phosphorylation mediates YWHAE and YWHAZ interactions.

It is found in the nucleus. It localises to the nucleoplasm. RNA-binding subunit of the trimeric nuclear exosome targeting (NEXT) complex, a complex that functions as an RNA exosome cofactor that directs a subset of non-coding short-lived RNAs for exosomal degradation. NEXT is involved in surveillance and turnover of aberrant transcripts and non-coding RNAs. Binds preferentially polyuridine sequences and associates with newly synthesized RNAs, including pre-mRNAs and short-lived exosome substrates such as promoter upstream transcripts (PROMPTs), enhancer RNAs (eRNAs), and 3'-extended products from small nuclear RNAs (snRNAs). Participates in several biological processes including DNA damage response (DDR) and stress response. During stress response, activation of the p38MAPK-MK2 pathway decreases RBM7-RNA-binding and subsequently the RNA exosome degradation activities, thereby modulating the turnover of non-coding transcriptome. Participates in DNA damage response (DDR), through its interaction with MEPCE and LARP7, the core subunits of 7SK snRNP complex, that release the positive transcription elongation factor b (P-TEFb) complex from the 7SK snRNP. In turn, activation of P-TEFb complex induces the transcription of P-TEFb-dependent DDR genes to promote cell viability. The protein is RNA-binding protein 7 of Mus musculus (Mouse).